The primary structure comprises 428 residues: 3-phosphoshikimate 1-carboxyvinyltransferase (428 aa).

3-phosphoshikimate is bound by residues Lys-22, Ser-23, and Arg-27. Lys-22 serves as a coordination point for phosphoenolpyruvate. Phosphoenolpyruvate is bound by residues Gly-94 and Arg-122. The 3-phosphoshikimate site is built by Ser-168, Ser-169, Gln-170, Ser-196, Asp-315, and Lys-342. A phosphoenolpyruvate-binding site is contributed by Gln-170. The active-site Proton acceptor is the Asp-315. 3 residues coordinate phosphoenolpyruvate: Arg-346, Arg-389, and Lys-414.

It belongs to the EPSP synthase family. In terms of assembly, monomer.

The protein localises to the cytoplasm. It catalyses the reaction 3-phosphoshikimate + phosphoenolpyruvate = 5-O-(1-carboxyvinyl)-3-phosphoshikimate + phosphate. The protein operates within metabolic intermediate biosynthesis; chorismate biosynthesis; chorismate from D-erythrose 4-phosphate and phosphoenolpyruvate: step 6/7. In terms of biological role, catalyzes the transfer of the enolpyruvyl moiety of phosphoenolpyruvate (PEP) to the 5-hydroxyl of shikimate-3-phosphate (S3P) to produce enolpyruvyl shikimate-3-phosphate and inorganic phosphate. The sequence is that of 3-phosphoshikimate 1-carboxyvinyltransferase from Thiobacillus denitrificans (strain ATCC 25259 / T1).